The chain runs to 390 residues: Phosphoglycerate kinase (390 aa).

Residues 21 to 23 (DLN), R36, 59 to 62 (HLGR), R114, and R147 each bind substrate. Residues K198, E314, and 340-343 (GGDT) contribute to the ATP site.

It belongs to the phosphoglycerate kinase family. In terms of assembly, monomer.

Its subcellular location is the cytoplasm. It carries out the reaction (2R)-3-phosphoglycerate + ATP = (2R)-3-phospho-glyceroyl phosphate + ADP. The protein operates within carbohydrate degradation; glycolysis; pyruvate from D-glyceraldehyde 3-phosphate: step 2/5. This is Phosphoglycerate kinase from Buchnera aphidicola subsp. Acyrthosiphon pisum (strain 5A).